The following is a 124-amino-acid chain: Small ribosomal subunit protein bS6 (124 aa).

The interval 96–124 (ETAPSPMMKEVQREEARKAAQTTTEGQAA) is disordered. Over residues 115–124 (AQTTTEGQAA) the composition is skewed to polar residues.

Belongs to the bacterial ribosomal protein bS6 family.

Binds together with bS18 to 16S ribosomal RNA. The polypeptide is Small ribosomal subunit protein bS6 (Cupriavidus necator (strain ATCC 17699 / DSM 428 / KCTC 22496 / NCIMB 10442 / H16 / Stanier 337) (Ralstonia eutropha)).